A 242-amino-acid chain; its full sequence is MASNGENGRHQEVGHKSLLQSDALYQYILETSVYPREPEAMKELREITAKHPWNLMTTSADEGQFLNMLLKLINAKNTMEIGVFTGYSLLATAMALPDDGKILAMDINRENYEIGLPVIEKAGLAHKIDFREGPALPVLDQMIEDGKYHGSYDFIFVDADKDNYLNYHKRLIDLVKVGGLIGYDNTLWNGSVVAPPDAPLRKYVRYYRDFVLELNKALAADPRIEICQLPVGDGITLCRRIS.

K16 serves as a coordination point for substrate. Residues T58, E80, 82-83 (GV), S88, D106, and A135 each bind S-adenosyl-L-methionine. Position 158 (D158) interacts with substrate. D158 contributes to the a divalent metal cation binding site. Residue D160 coordinates S-adenosyl-L-methionine. 2 residues coordinate a divalent metal cation: D184 and N185. N189 serves as a coordination point for substrate.

Belongs to the class I-like SAM-binding methyltransferase superfamily. Cation-dependent O-methyltransferase family. CCoAMT subfamily. A divalent metal cation is required as a cofactor.

The catalysed reaction is (E)-caffeoyl-CoA + S-adenosyl-L-methionine = (E)-feruloyl-CoA + S-adenosyl-L-homocysteine + H(+). It participates in aromatic compound metabolism; phenylpropanoid biosynthesis. Functionally, methylates caffeoyl-CoA to feruloyl-CoA and 5-hydroxyferuloyl-CoA to sinapoyl-CoA. Plays a role in the synthesis of feruloylated polysaccharides. Involved in the reinforcement of the plant cell wall. Also involved in the responding to wounding or pathogen challenge by the increased formation of cell wall-bound ferulic acid polymers. This chain is Caffeoyl-CoA O-methyltransferase (CCOAOMT), found in Solanum tuberosum (Potato).